A 335-amino-acid polypeptide reads, in one-letter code: Ornithine carbamoyltransferase, catabolic (335 aa).

Carbamoyl phosphate contacts are provided by residues 59-62 (STRT), glutamine 86, arginine 110, and 137-140 (HPTQ). L-ornithine contacts are provided by residues asparagine 169, aspartate 233, and 237-238 (SM). Carbamoyl phosphate is bound by residues 274–275 (CL) and arginine 319.

It belongs to the aspartate/ornithine carbamoyltransferase superfamily. OTCase family.

It is found in the cytoplasm. The catalysed reaction is carbamoyl phosphate + L-ornithine = L-citrulline + phosphate + H(+). It functions in the pathway amino-acid degradation; L-arginine degradation via ADI pathway; carbamoyl phosphate from L-arginine: step 2/2. Functionally, reversibly catalyzes the transfer of the carbamoyl group from carbamoyl phosphate (CP) to the N(epsilon) atom of ornithine (ORN) to produce L-citrulline. The chain is Ornithine carbamoyltransferase, catabolic (arcB) from Bacillus licheniformis (strain ATCC 14580 / DSM 13 / JCM 2505 / CCUG 7422 / NBRC 12200 / NCIMB 9375 / NCTC 10341 / NRRL NRS-1264 / Gibson 46).